A 432-amino-acid chain; its full sequence is Adenylosuccinate synthetase (432 aa).

GTP contacts are provided by residues 13–19 (GDEGKGK) and 41–43 (GHT). D14 serves as the catalytic Proton acceptor. Positions 14 and 41 each coordinate Mg(2+). Residues 14–17 (DEGK), 39–42 (NAGH), T130, R144, Q225, T240, and R304 each bind IMP. H42 acts as the Proton donor in catalysis. 300-306 (ATTGRSR) serves as a coordination point for substrate. GTP is bound by residues R306, 332–334 (KLD), and 415–417 (STG).

Belongs to the adenylosuccinate synthetase family. Homodimer. Mg(2+) serves as cofactor.

The protein resides in the cytoplasm. The enzyme catalyses IMP + L-aspartate + GTP = N(6)-(1,2-dicarboxyethyl)-AMP + GDP + phosphate + 2 H(+). Its pathway is purine metabolism; AMP biosynthesis via de novo pathway; AMP from IMP: step 1/2. Functionally, plays an important role in the de novo pathway of purine nucleotide biosynthesis. Catalyzes the first committed step in the biosynthesis of AMP from IMP. This Proteus mirabilis (strain HI4320) protein is Adenylosuccinate synthetase.